The chain runs to 382 residues: Ribosomal RNA large subunit methyltransferase G (382 aa).

The protein belongs to the methyltransferase superfamily. RlmG family.

It is found in the cytoplasm. The enzyme catalyses guanosine(1835) in 23S rRNA + S-adenosyl-L-methionine = N(2)-methylguanosine(1835) in 23S rRNA + S-adenosyl-L-homocysteine + H(+). Its function is as follows. Specifically methylates the guanine in position 1835 (m2G1835) of 23S rRNA. This chain is Ribosomal RNA large subunit methyltransferase G, found in Aliivibrio salmonicida (strain LFI1238) (Vibrio salmonicida (strain LFI1238)).